A 507-amino-acid polypeptide reads, in one-letter code: Ribosomal protein uS12 methylthiotransferase RimO (507 aa).

The region spanning 13–124 is the MTTase N-terminal domain; the sequence is RRVALLTLGC…ISDRLGAVLA (112 aa). [4Fe-4S] cluster-binding residues include C22, C58, and C87. Residues 150 to 175 are disordered; sequence AAVSLPGHGTRAAAAGPGGRSAPVEV. Residues 155-172 are compositionally biased toward low complexity; sequence PGHGTRAAAAGPGGRSAP. The region spanning 191-422 is the Radical SAM core domain; sequence LDTGPVASLK…ALADELCAQR (232 aa). 3 residues coordinate [4Fe-4S] cluster: C205, C209, and C212. The 74-residue stretch at 424–497 folds into the TRAM domain; the sequence is EQRLGSTVQV…GVDLVAVPDG (74 aa).

Belongs to the methylthiotransferase family. RimO subfamily. [4Fe-4S] cluster serves as cofactor.

The protein localises to the cytoplasm. The catalysed reaction is L-aspartate(89)-[ribosomal protein uS12]-hydrogen + (sulfur carrier)-SH + AH2 + 2 S-adenosyl-L-methionine = 3-methylsulfanyl-L-aspartate(89)-[ribosomal protein uS12]-hydrogen + (sulfur carrier)-H + 5'-deoxyadenosine + L-methionine + A + S-adenosyl-L-homocysteine + 2 H(+). In terms of biological role, catalyzes the methylthiolation of an aspartic acid residue of ribosomal protein uS12. This Salinispora arenicola (strain CNS-205) protein is Ribosomal protein uS12 methylthiotransferase RimO.